Here is a 923-residue protein sequence, read N- to C-terminus: Dynein axonemal intermediate chain 3 (923 aa).

Residues 1-35 (MAPKPPKSPKGQKKGKKNMKQQLLVPEEEEPMNME) are disordered. Over residues 10-19 (KGQKKGKKNM) the composition is skewed to basic residues. WD repeat units follow at residues 398–438 (ESPD…DRIE), 480–536 (GHRK…PAVT), 702–741 (VHDG…GPLL), and 745–785 (CGPK…HEPA). Positions 869 to 889 (LELVKKKAKIYQKTKEQMEAE) form a coiled coil.

In terms of assembly, interacts with ACTR2; this interaction reduces binding of the Arp2/3 complex to the VCA domain of nucleation promoting factors. Part of the multisubunit axonemal dynein complex formed at least of two heavy chains and a number of intermediate and light chains. Found in a associated with the catalytic heavy chain DNAH2, the intermediate chain DNAI4, and the light chain DYNLT1. Strongly expressed in the testes. Detected also in brain and lung tissues.

Its subcellular location is the cytoplasm. Functionally, acts as a negative regulator of cell migration, invasion, and metastasis downstream of p53/TP53, through inhibition of Arp2/3 complex-mediated actin polymerization. Via its association with the multisubunit axonemal dynein complex, is potentially involved in the regulation of cilia function. May play a role in osteogenesis of dental tissue-derived mesenchymal stem cells. This is Dynein axonemal intermediate chain 3 (Dnai3) from Mus musculus (Mouse).